The following is a 97-amino-acid chain: Integration host factor subunit alpha (97 aa).

This sequence belongs to the bacterial histone-like protein family. In terms of assembly, heterodimer of an alpha and a beta chain.

This protein is one of the two subunits of integration host factor, a specific DNA-binding protein that functions in genetic recombination as well as in transcriptional and translational control. The chain is Integration host factor subunit alpha from Colwellia psychrerythraea (strain 34H / ATCC BAA-681) (Vibrio psychroerythus).